The chain runs to 734 residues: Photosystem I P700 chlorophyll a apoprotein A2 (734 aa).

8 helical membrane-spanning segments follow: residues 46–69, 135–158, 175–199, 273–291, 330–353, 369–395, 417–439, and 517–535; these read IFSSHFGHIAIIFLWTSGNLFHVA, LYNGSLFLLILSAIMLFAGWLHLQ, LNHHLSGLFGLSSLAWTGHLIHVAI, MAHHHLAIAIVFIIAGHMY, LHMQLGLALASLGVITSLVAQHMY, AALYTHHQYIAGFLMVGAFAHGAIFFI, AIISHLSWVSLFLGFHTLGLYIH, and FLVHHAIALGLHTTTLILV. Cys-559 and Cys-568 together coordinate [4Fe-4S] cluster. 2 helical membrane passes run 575–596 and 643–665; these read AFYLSVFWMLNTIGWVTFYWHW and LSVWAWMFLFGHLVWATGFMFLI. Positions 654, 662, and 670 each coordinate chlorophyll a. Phylloquinone is bound at residue Trp-671. A helical transmembrane segment spans residues 707-727; sequence LVGLVHFSVGYILTYAAFVIA.

Belongs to the PsaA/PsaB family. As to quaternary structure, the PsaA/B heterodimer binds the P700 chlorophyll special pair and subsequent electron acceptors. PSI consists of a core antenna complex that captures photons, and an electron transfer chain that converts photonic excitation into a charge separation. The eukaryotic PSI reaction center is composed of at least 11 subunits. Requires P700 is a chlorophyll a/chlorophyll a' dimer, A0 is one or more chlorophyll a, A1 is one or both phylloquinones and FX is a shared 4Fe-4S iron-sulfur center. as cofactor.

It localises to the plastid. The protein resides in the chloroplast thylakoid membrane. The enzyme catalyses reduced [plastocyanin] + hnu + oxidized [2Fe-2S]-[ferredoxin] = oxidized [plastocyanin] + reduced [2Fe-2S]-[ferredoxin]. Its function is as follows. PsaA and PsaB bind P700, the primary electron donor of photosystem I (PSI), as well as the electron acceptors A0, A1 and FX. PSI is a plastocyanin/cytochrome c6-ferredoxin oxidoreductase, converting photonic excitation into a charge separation, which transfers an electron from the donor P700 chlorophyll pair to the spectroscopically characterized acceptors A0, A1, FX, FA and FB in turn. Oxidized P700 is reduced on the lumenal side of the thylakoid membrane by plastocyanin or cytochrome c6. This chain is Photosystem I P700 chlorophyll a apoprotein A2, found in Gracilaria tenuistipitata var. liui (Red alga).